Reading from the N-terminus, the 516-residue chain is Pickpocket protein 11 (516 aa).

The next 2 helical transmembrane spans lie at 117-137 and 454-474; these read ILWW…VIMS and FIGT…VSVF.

This sequence belongs to the amiloride-sensitive sodium channel (TC 1.A.6) family. As to expression, expressed in embryonic and larval tracheal systems in the dorsal trunk and transverse connective (TC), but not in the junction between the dorsal trunk and TC, and in several tracheal branches and terminal cells. In larvae, also expressed in ventral pits. Expressed in the taste-sensing terminal organ of the larval head. In adult, expressed in hairs on the tibia, femur, tarsi of the leg and wing margin.

The protein localises to the membrane. Functionally, part of a complex that plays a role in tracheal liquid clearance. In both larvae and adults, contributes to the behavioral response to salt. Probable role in sodium transport. The polypeptide is Pickpocket protein 11 (ppk11) (Drosophila melanogaster (Fruit fly)).